A 144-amino-acid polypeptide reads, in one-letter code: Histone H2B.2, sperm (144 aa).

The disordered stretch occupies residues 1-51 (MPRSPAKTSPRKGSPRKGSPSRKASPKRGGKGAKRAGKGGRRRRVVKRRRR). 5 consecutive short sequence motifs (SPKK motif) follow at residues 4–7 (SPAK), 9–12 (SPRK), 14–17 (SPRK), 19–22 (SPSR), and 25–28 (SPKR). Residues serine 14, serine 19, and serine 25 each carry the phosphoserine modification. The segment covering 24–51 (ASPKRGGKGAKRAGKGGRRRRVVKRRRR) has biased composition (basic residues). O-linked (GlcNAc) serine glycosylation occurs at serine 131. Lysine 139 is covalently cross-linked (Glycyl lysine isopeptide (Lys-Gly) (interchain with G-Cter in ubiquitin)).

Belongs to the histone H2B family. As to quaternary structure, the nucleosome is a histone octamer containing two molecules each of H2A, H2B, H3 and H4 assembled in one H3-H4 heterotetramer and two H2A-H2B heterodimers. The octamer wraps approximately 147 bp of DNA. In terms of processing, monoubiquitination of Lys-139 gives a specific tag for epigenetic transcriptional activation and is also prerequisite for histone H3 'Lys-4' and 'Lys-79' methylation. Post-translationally, phosphorylated on SPKK motifs 3, 4 and 5; which may regulate DNA binding. Dephosphorylated during maturation of spermatids to mature sperm and rephosphorylated at fertilization.

The protein resides in the nucleus. It is found in the chromosome. Functionally, core component of nucleosome. Nucleosomes wrap and compact DNA into chromatin, limiting DNA accessibility to the cellular machineries which require DNA as a template. Histones thereby play a central role in transcription regulation, DNA repair, DNA replication and chromosomal stability. DNA accessibility is regulated via a complex set of post-translational modifications of histones, also called histone code, and nucleosome remodeling. In Parechinus angulosus (Angulate sea urchin), this protein is Histone H2B.2, sperm.